Here is a 305-residue protein sequence, read N- to C-terminus: Glutaminase (305 aa).

Substrate contacts are provided by Ser-61, Asn-113, Glu-158, Asn-165, Tyr-189, Tyr-241, and Val-259.

It belongs to the glutaminase family. As to quaternary structure, homotetramer.

The catalysed reaction is L-glutamine + H2O = L-glutamate + NH4(+). This is Glutaminase from Alkaliphilus metalliredigens (strain QYMF).